Reading from the N-terminus, the 207-residue chain is Dephospho-CoA kinase (207 aa).

In terms of domain architecture, DPCK spans 5-203 (AVGLTGGIAC…ARYRALASVF (199 aa)). Position 13–18 (13–18 (ACGKSL)) interacts with ATP.

Belongs to the CoaE family.

Its subcellular location is the cytoplasm. The enzyme catalyses 3'-dephospho-CoA + ATP = ADP + CoA + H(+). Its pathway is cofactor biosynthesis; coenzyme A biosynthesis; CoA from (R)-pantothenate: step 5/5. Catalyzes the phosphorylation of the 3'-hydroxyl group of dephosphocoenzyme A to form coenzyme A. In Xylella fastidiosa (strain 9a5c), this protein is Dephospho-CoA kinase.